The sequence spans 795 residues: Lon protease (795 aa).

The region spanning 11–203 (GRVIPVSDIV…KFIDYLLKQK (193 aa)) is the Lon N-terminal domain. 356–363 (GPPGVGKT) contacts ATP. In terms of domain architecture, Lon proteolytic spans 593-771 (DNVPGVVTGL…EDVLRETLGI (179 aa)). Catalysis depends on residues Ser-677 and Lys-720.

Belongs to the peptidase S16 family. In terms of assembly, homohexamer. Organized in a ring with a central cavity.

The protein localises to the cytoplasm. It catalyses the reaction Hydrolysis of proteins in presence of ATP.. Functionally, ATP-dependent serine protease that mediates the selective degradation of mutant and abnormal proteins as well as certain short-lived regulatory proteins. Required for cellular homeostasis and for survival from DNA damage and developmental changes induced by stress. Degrades polypeptides processively to yield small peptide fragments that are 5 to 10 amino acids long. Binds to DNA in a double-stranded, site-specific manner. The chain is Lon protease from Clostridium beijerinckii (strain ATCC 51743 / NCIMB 8052) (Clostridium acetobutylicum).